Consider the following 479-residue polypeptide: NADH oxidase (479 aa).

Residues 8–12, D33, C43, V80, 111–114, K149, and Y177 contribute to the FAD site; these read GVNHA and ASGA. The active-site Proton acceptor is the H11. Residue C43 is the Redox-active of the active site. C43 carries the post-translational modification Cysteine sulfinic acid (-SO2H). NAD(+)-binding positions include 170-185, D197, and G264; that span reads VAIVGSGYIGLELAEA. Residues 295–305, L322, A323, and T324 contribute to the FAD site; that span reads LNHENVYVIGG. A353 contributes to the NAD(+) binding site. F450 serves as a coordination point for FAD.

Belongs to the class-III pyridine nucleotide-disulfide oxidoreductase family. FAD is required as a cofactor.

The enzyme catalyses 2 NADH + O2 + 2 H(+) = 2 NAD(+) + 2 H2O. Functionally, catalyzes the four-electron reduction of molecular oxygen to water. This is NADH oxidase (nox) from Mycoplasma pneumoniae (strain ATCC 29342 / M129 / Subtype 1) (Mycoplasmoides pneumoniae).